A 123-amino-acid polypeptide reads, in one-letter code: WAP four-disulfide core domain protein 5 (123 aa).

The signal sequence occupies residues 1-24 (MRIQSLLLLGALLAVGSQPPAAFG). 2 WAP domains span residues 27–73 (KGEK…CVPR) and 74–121 (VSVK…RDPA). Cystine bridges form between C34–C62, C41–C66, C49–C61, C55–C70, C81–C109, C88–C113, C96–C108, and C102–C117.

It is found in the secreted. In terms of biological role, putative acid-stable proteinase inhibitor. In Saimiri boliviensis boliviensis (Bolivian squirrel monkey), this protein is WAP four-disulfide core domain protein 5 (WFDC5).